Consider the following 96-residue polypeptide: Co-chaperonin GroES (96 aa).

It belongs to the GroES chaperonin family. As to quaternary structure, heptamer of 7 subunits arranged in a ring. Interacts with the chaperonin GroEL.

The protein resides in the cytoplasm. Functionally, together with the chaperonin GroEL, plays an essential role in assisting protein folding. The GroEL-GroES system forms a nano-cage that allows encapsulation of the non-native substrate proteins and provides a physical environment optimized to promote and accelerate protein folding. GroES binds to the apical surface of the GroEL ring, thereby capping the opening of the GroEL channel. This Trichlorobacter lovleyi (strain ATCC BAA-1151 / DSM 17278 / SZ) (Geobacter lovleyi) protein is Co-chaperonin GroES.